Consider the following 1191-residue polypeptide: DNA topoisomerase 2 (1191 aa).

ATP contacts are provided by residues Asn64, Asn95, and 142–149; that span reads GTNGVGLK. Mg(2+)-binding residues include Glu437, Asp538, and Asp540. Residues 706–1173 enclose the Topo IIA-type catalytic domain; sequence IPNFLDGMTR…PGASVWLEEI (468 aa). The active-site O-(5'-phospho-DNA)-tyrosine intermediate is the Tyr799.

It belongs to the type II topoisomerase family. Mg(2+) is required as a cofactor. Requires Mn(2+) as cofactor. Ca(2+) serves as cofactor.

The protein localises to the host cytoplasm. The catalysed reaction is ATP-dependent breakage, passage and rejoining of double-stranded DNA.. Its function is as follows. Type II topoisomerase. Processively relaxes supercoiled DNA. Displays DNA-supercoiling activity only when associated with the viral histone-like protein. The sequence is that of DNA topoisomerase 2 from Ornithodoros (relapsing fever ticks).